The sequence spans 102 residues: Movement protein (102 aa).

A helical membrane pass occupies residues 43 to 63 (VVALIVILFAVGIVYLAYTLF). A disordered region spans residues 82–102 (IGFGNTPLRRPGEGNPNGGPV).

Belongs to the mastrevirus movement protein family. Interacts with the capsid protein (CP). Part of a MP-CP-viral DNA complex.

It is found in the host membrane. Its function is as follows. Involved in the viral transport within, and between cells. The chain is Movement protein from Tobacco yellow dwarf virus (strain Australia) (TYDV).